Consider the following 831-residue polypeptide: DNA ligase (831 aa).

Residues 34–38 (DADYD), 83–84 (SL), and Glu114 contribute to the NAD(+) site. Lys116 functions as the N6-AMP-lysine intermediate in the catalytic mechanism. Positions 137, 174, 291, and 315 each coordinate NAD(+). Cys409, Cys412, Cys427, and Cys433 together coordinate Zn(2+). Residues 749–831 (AHTAPLNGQS…LAFLEQYSAQ (83 aa)) enclose the BRCT domain.

It belongs to the NAD-dependent DNA ligase family. LigA subfamily. Requires Mg(2+) as cofactor. Mn(2+) is required as a cofactor.

The catalysed reaction is NAD(+) + (deoxyribonucleotide)n-3'-hydroxyl + 5'-phospho-(deoxyribonucleotide)m = (deoxyribonucleotide)n+m + AMP + beta-nicotinamide D-nucleotide.. Its function is as follows. DNA ligase that catalyzes the formation of phosphodiester linkages between 5'-phosphoryl and 3'-hydroxyl groups in double-stranded DNA using NAD as a coenzyme and as the energy source for the reaction. It is essential for DNA replication and repair of damaged DNA. The protein is DNA ligase of Xylella fastidiosa (strain M23).